The chain runs to 2542 residues: Unconventional myosin-IXa (2542 aa).

One can recognise a Ras-associating domain in the interval 14 to 112 (NEHTLRIYPG…YRFLLREKNL (99 aa)). The region spanning 146–1017 (KDFDDLCSLP…ERQHLQDLLH (872 aa)) is the Myosin motor domain. The chain crosses the membrane as a helical span at residues 175–195 (IYTYVGSILIAINPFKFLPIY). ATP is bound at residue 239 to 246 (GESGSGKT). Ser755 is modified (phosphoserine). An actin-binding region spans residues 908–919 (QAEPYFVKCIRS). IQ domains lie at 1021-1041 (LRRI…QQFL), 1043-1072 (LRQA…EKDA), 1075-1104 (MASA…AAVI), 1116-1145 (RHKA…KIIL), and 1139-1168 (QRNK…EKLR). Residues 1022–1163 (RRIVLLQRWF…RARQRCNALK (142 aa)) form a neck or regulatory domain region. The tail stretch occupies residues 1164–2505 (EEKLREAKLE…LKNVKNSPQK (1342 aa)). Residues 1221–1240 (RESSMDFSKESPDKQQERGR) show a composition bias toward basic and acidic residues. The interval 1221–1276 (RESSMDFSKESPDKQQERGRRQSGTDLQEDVIVRQRPKSLEDLHQKKVGRAKRESR) is disordered. Phosphoserine is present on Ser1243. Phosphothreonine is present on Thr1245. Ser1259 carries the post-translational modification Phosphoserine. The stretch at 1265 to 1292 (QKKVGRAKRESRRMRELEQAIFSLELLK) forms a coiled coil. Residues 1266–1276 (KKVGRAKRESR) show a composition bias toward basic residues. A phosphoserine mark is found at Ser1300 and Ser1318. The tract at residues 1342 to 1401 (KSKPESLILDEGELKISSPNTFTNPKSQDNALSASSETSSTLAGKGASSDSEHLKNGTAK) is disordered. The segment covering 1358-1371 (SSPNTFTNPKSQDN) has biased composition (polar residues). The segment covering 1372–1384 (ALSASSETSSTLA) has biased composition (low complexity). Basic and acidic residues predominate over residues 1391–1401 (DSEHLKNGTAK). The stretch at 1492-1539 (TVLKKLEKLNIEKEKRQKQLQQQNEKEMMEQIRQQTDILEKERKAFKT) forms a coiled coil. Disordered stretches follow at residues 1650 to 1675 (RSTE…REGS), 1693 to 1727 (SGNP…SVDE), 1767 to 1793 (GKQG…PGPD), and 1806 to 1841 (QYHP…KRGV). A compositionally biased stretch (basic and acidic residues) spans 1665 to 1675 (HRSDDPSREGS). Residues 1715–1726 (QQETSQRFSSVD) show a composition bias toward polar residues. A compositionally biased stretch (basic and acidic residues) spans 1821–1833 (CRKEFKENKEPSP). At Ser1950 the chain carries Phosphoserine. 2 Phorbol-ester/DAG-type zinc fingers span residues 2001–2050 (GHIF…TAKC) and 2068–2119 (SRLT…DTDA). The region spanning 2065 to 2253 (VELSRLTSED…LIVVEQMNKY (189 aa)) is the Rho-GAP domain. Phosphoserine is present on residues Ser2293 and Ser2296. Residues 2324-2360 (TDQQQAAMQQEEKVLTEQIENLQKEKEELTFEMLVLE) are a coiled coil. Positions 2361–2443 (PRASDDETLE…NTTSSHGTRK (83 aa)) are disordered. Over residues 2377-2386 (TADSSENLNM) the composition is skewed to polar residues. Over residues 2420-2438 (SLDSVSSSVSSCLSNTTSS) the composition is skewed to low complexity. Ser2458 carries the phosphoserine modification. The disordered stretch occupies residues 2465 to 2530 (TEGPLGQAKS…TVDSDCSSTQ (66 aa)).

It belongs to the TRAFAC class myosin-kinesin ATPase superfamily. Myosin family. In terms of processing, phosphorylated by ALPK1 following monosodium urate monohydrate (MSU)-induced inflammation. As to expression, expressed in the eye, lung, liver, brain, heart, kidney, skeletal muscle and spleen. No detection was found in liver. In the brain, expressed in the ependymal cells of the third ventricle and the aqueduct.

It localises to the membrane. The protein localises to the cytoplasm. The protein resides in the synapse. Its subcellular location is the cell projection. It is found in the growth cone. Myosins are actin-based motor molecules with ATPase activity. Unconventional myosins serve in intracellular movements. Regulates Rho by stimulating it's GTPase activity in neurons. Required for the regulation of neurite branching and motor neuron axon guidance. The protein is Unconventional myosin-IXa (Myo9a) of Mus musculus (Mouse).